The primary structure comprises 1468 residues: Neuropathy target esterase sws (1468 aa).

Over 1-34 the chain is Lumenal; the sequence is MDVLEMLRASASGSYNTIFSDAWCQYVSKQITAT. A helical membrane pass occupies residues 35–55; sequence VYMYCALVMMSLLFIAWFLYF. Residues 56–1468 lie on the Cytoplasmic side of the membrane; the sequence is KRMARLRLRD…RSSPNNETKN (1413 aa). 174–301 contacts a nucleoside 3',5'-cyclic phosphate; sequence IFGHFEKPVF…IRVIQVIMIR (128 aa). 2 stretches are compositionally biased toward polar residues: residues 332–348 and 357–366; these read TMSG…SRQA and NQLNLMQSAA. The tract at residues 332–411 is disordered; the sequence is TMSGPINSQT…DGSFHGTTNL (80 aa). A phosphoserine mark is found at serine 442 and serine 451. A nucleoside 3',5'-cyclic phosphate-binding positions include 480–607 and 596–723; these read ELGL…VVRR and IVLD…LSHR. Residues 950–1116 form the PNPLA domain; sequence LVLGGGGARG…VNNLPGHLWR (167 aa). A GXGXXG motif is present at residues 954–959; the sequence is GGGARG. The GXSXG motif lies at 981–985; it reads GVSIG. Catalysis depends on serine 983, which acts as the Nucleophile. The Proton acceptor role is filled by aspartate 1103. A DGA/G motif is present at residues 1103 to 1105; that stretch reads DGG. The residue at position 1197 (serine 1197) is a Phosphoserine. The segment at 1368–1468 is disordered; sequence ERKMDKSTQS…RSSPNNETKN (101 aa). Residues 1374–1383 show a composition bias toward low complexity; that stretch reads STQSSPPTSS. A compositionally biased stretch (basic and acidic residues) spans 1385-1395; it reads TDMRGKEEAKH. Over residues 1419–1441 the composition is skewed to low complexity; the sequence is TQTGQEQELQQQQKLQQLQQDQG. Basic and acidic residues predominate over residues 1446 to 1459; that stretch reads QLVDKDKEEDKENR.

It belongs to the NTE family. As to quaternary structure, interacts with Pka-C3; interaction inhibits the catalytic function of Pka-C3 and the esterase activity of sws.

The protein resides in the endoplasmic reticulum membrane. It carries out the reaction a 1-acyl-sn-glycero-3-phosphocholine + H2O = sn-glycerol 3-phosphocholine + a fatty acid + H(+). In terms of biological role, phospholipase B that deacylates intracellular phosphatidylcholine (PtdCho), generating glycerophosphocholine (GroPtdCho). This deacylation occurs at both sn-2 and sn-1 positions of PtdCho. Its specific chemical modification by certain organophosphorus (OP) compounds leads to distal axonopathy. Plays a role in the signaling mechanism between neurons and glia that regulates glia wrapping during development of the adult brain. Essential for membrane lipid homeostasis and cell survival in both neurons and glia of the adult brain. The chain is Neuropathy target esterase sws from Drosophila sechellia (Fruit fly).